A 528-amino-acid polypeptide reads, in one-letter code: MSNALVPQEVSRRRTFAIISHPDAGKTTITEKVLLFGNALQRAGTVKGKKSGQHAKSDWMEMEKERGISVTTSVMQFPYSDCLVNLLDTPGHEDFSEDTYRTLTAVDSCLMVIDAAKGVEARTIKLMEVTRLRDTPIITFMNKLDRDTRDPIDLLDEVESVLNIKCAPITWPIGMGKEFKGVYHLLRDETILYSTGQGHTIQEKRVIKGLDNPELDTAIGDYAEELRDMLDLVKGASHEFNHEEFIAGELTPVFFGTAMGNFGVDHMLDGLVDWAPSPQGRETDQGKVEAKDEKFSGFVFKIQANMDPKHRDRIAFCRIVSGKYQKGMKMHQSRIGKDVRISDALTFLAGDRELLEEAYAGDIIGLHNHGSIQIGDTFTSGDKFRFAGIPNFAPELFKRIRLRDPLKQKQLLKGLIQLSEEGAVQVFRPLQNNDLIVGAVGVLQFDVVVARLKGEYNVDAMYEHINVATARWIYGKDERKVDEFRRKAEANLALDGGDNLTYIAPTMVNLSLAQERYPEIEFHQTREH.

The 269-residue stretch at 11 to 279 (SRRRTFAIIS…GLVDWAPSPQ (269 aa)) folds into the tr-type G domain. GTP-binding positions include 20-27 (SHPDAGKT), 88-92 (DTPGH), and 142-145 (NKLD).

Belongs to the TRAFAC class translation factor GTPase superfamily. Classic translation factor GTPase family. PrfC subfamily.

Its subcellular location is the cytoplasm. Its function is as follows. Increases the formation of ribosomal termination complexes and stimulates activities of RF-1 and RF-2. It binds guanine nucleotides and has strong preference for UGA stop codons. It may interact directly with the ribosome. The stimulation of RF-1 and RF-2 is significantly reduced by GTP and GDP, but not by GMP. The protein is Peptide chain release factor 3 of Pseudoalteromonas atlantica (strain T6c / ATCC BAA-1087).